We begin with the raw amino-acid sequence, 409 residues long: MSTKIKGELFPSRSLVSKKWTFLLCFGSFCFGILFTDRMWIIPESKDMPRPSVSTEAERLKLISEGCDPKTLYQKEVNRDPQALFGEVSKTHNAIQTLDKTISSLEMELAAARSAQESLVNGAPISNDMEKKQLPGKRRYLMVVGINTAFSSRKRRDSVRTTWMPSGEKRKKLEEEKGIIIRFVIGHSATAGGILDRSIEAEDKKHGDFLRLDHVEGYLELSGKTKTYFSTAVSKWDAEFYVKVDDDVHVNIATLGETLVRHRKKHRVYLGCMKSGPVLSQKGVRYHEPEYWKFGENGNKYFRHATGQLYAISRDLASYISLNQHVLHKYANEDVTLGAWFIGLDVTHIDDRRLCCGTPPDCEWKAQAGNICVASFDWTCSGICRSADRIKEVHKRCGEPENAIWKARF.

A helical; Signal-anchor for type II membrane protein transmembrane segment spans residues 20–42 (WTFLLCFGSFCFGILFTDRMWII).

The protein belongs to the glycosyltransferase 31 family. Mn(2+) is required as a cofactor.

Its subcellular location is the golgi apparatus membrane. The protein operates within protein modification; protein glycosylation. Functionally, beta-1,3-galactosyltransferase that transfers galactose from UDP-galactose to substrates with a terminal glycosyl residue. This chain is Probable beta-1,3-galactosyltransferase 3 (B3GALT3), found in Arabidopsis thaliana (Mouse-ear cress).